The following is a 410-amino-acid chain: Arginine deiminase (410 aa).

The active-site Amidino-cysteine intermediate is Cys-399.

This sequence belongs to the arginine deiminase family.

It is found in the cytoplasm. It catalyses the reaction L-arginine + H2O = L-citrulline + NH4(+). Its pathway is amino-acid degradation; L-arginine degradation via ADI pathway; carbamoyl phosphate from L-arginine: step 1/2. This chain is Arginine deiminase, found in Treponema denticola (strain ATCC 35405 / DSM 14222 / CIP 103919 / JCM 8153 / KCTC 15104).